We begin with the raw amino-acid sequence, 248 residues long: tRNA (guanine-N(7)-)-methyltransferase (248 aa).

S-adenosyl-L-methionine-binding positions include glycine 70, 93–94 (EI), 129–130 (NA), and leucine 149. Aspartate 152 is a catalytic residue. 227-229 (SEE) contacts S-adenosyl-L-methionine.

The protein belongs to the class I-like SAM-binding methyltransferase superfamily. TrmB family.

The protein resides in the nucleus. The enzyme catalyses guanosine(46) in tRNA + S-adenosyl-L-methionine = N(7)-methylguanosine(46) in tRNA + S-adenosyl-L-homocysteine. It participates in tRNA modification; N(7)-methylguanine-tRNA biosynthesis. Functionally, catalyzes the formation of N(7)-methylguanine at position 46 (m7G46) in tRNA. The chain is tRNA (guanine-N(7)-)-methyltransferase from Drosophila mojavensis (Fruit fly).